The sequence spans 377 residues: Hsc70-interacting protein 2 (377 aa).

The disordered stretch occupies residues 68-123 (AKANEPANAPEDSEDEKSLSDPESDVELDMEGVIEADSDPAQPMGNYSKKATEEEV). Position 80 is a phosphoserine (S80). Positions 89-105 (PESDVELDMEGVIEADS) are enriched in acidic residues. 3 TPR repeats span residues 126 to 159 (ASELRAQAASAYGQQKFDEAIALYTKAIELSPGN), 161 to 193 (LFHAKRGQAFLKLKKPNACIRDCDVALELNSDL), and 195 to 227 (AGYKFRGRARRLLGDFELAAHDLRQACKLDFDE). The stretch at 239-276 (NAKKIEQHRLKQERRQAERKIKERQRDQRRARKEQEKH) forms a coiled coil. Residues 243–277 (IEQHRLKQERRQAERKIKERQRDQRRARKEQEKHN) show a composition bias toward basic and acidic residues. Disordered regions lie at residues 243–302 (IEQH…DILG) and 344–377 (DVGAAFGQAGEKAGKPSEPKPKKDSADFVDDGLD). Over residues 282 to 293 (GSSGEFSGGNPG) the composition is skewed to gly residues. The STI1 domain occupies 294-336 (NGNMSDILGAMSDPEVSAAIQDILSNPGNITKYASNPKIYNLI). The segment covering 355–369 (KAGKPSEPKPKKDSA) has biased composition (basic and acidic residues).

It belongs to the FAM10 family. As to quaternary structure, homotetramer. Interacts with Hsc70 as well as DNAJ homologs and Hsp90.

Its subcellular location is the cytoplasm. Functionally, one HIP oligomer binds the ATPase domains of at least two Hsc70 molecules dependent on activation of the Hsc70 ATPase by Hsp40. Stabilizes the ADP state of Hsc70 that has a high affinity for substrate protein. Through its own chaperone activity, it may contribute to the interaction of Hsc70 with various target proteins. This chain is Hsc70-interacting protein 2, found in Drosophila melanogaster (Fruit fly).